The following is a 92-amino-acid chain: MGRSLKKGPFVSDSLLTKIEKLNEKGDKQVIKTWSRASTILPQMVGHTIAVHNGKQHVPVYVSEQMVGHKLGEFAPTRTFRGHAKSDKKSRR.

This sequence belongs to the universal ribosomal protein uS19 family.

In terms of biological role, protein S19 forms a complex with S13 that binds strongly to the 16S ribosomal RNA. In Rippkaea orientalis (strain PCC 8801 / RF-1) (Cyanothece sp. (strain PCC 8801)), this protein is Small ribosomal subunit protein uS19.